The chain runs to 199 residues: MNPRKKVDLKLIIVGALGVGKTSLLHQYVHKTFFEEYQTTLGASILSKIIILDDTTLKLQIWDTGGQERFRSMVSTFYKGSDGCILAFDVTDPESFEALDIWRDDVLAKIIPMEQSYPMVVLGNKIDLEDRKVSQEVVHGWCKEKDMPYFEVSAKNDINVVQAFEVLASRALLRYQGTAENHLIDSIKLSPGQPKSRCC.

Residues 15-22, 34-40, 63-67, 124-127, and 154-155 each bind GTP; these read GALGVGKT, FEEYQTT, DTGGQ, NKID, and AK. 2 short sequence motifs (switch) span residues 28-41 and 67-82; these read YVHK…QTTL and QERF…KGSD. Ser-186 carries the phosphoserine modification. 2 S-geranylgeranyl cysteine lipidation sites follow: Cys-198 and Cys-199.

Belongs to the small GTPase superfamily. Rab family.

The protein resides in the late endosome. It localises to the lysosome. It is found in the golgi apparatus. Its subcellular location is the trans-Golgi network. The protein localises to the cytoplasmic vesicle. The protein resides in the phagosome. It localises to the phagosome membrane. Its function is as follows. Controls vesicular trafficking from endosomes to the trans-Golgi network (TGN). Acts as a negative regulator of TLR9 signaling and can suppress TLR9-triggered TNFA, IL6, and IFNB production in macrophages by promoting TLR9 lysosomal degradation. Also negatively regulates TLR4 signaling in macrophages by promoting lysosomal degradation of TLR4. Promotes megakaryocytic differentiation by increasing NF-kappa-B-dependent IL6 production and subsequently enhancing the association of STAT3 with GATA1. Not involved in the regulation of the EGF- and EGFR degradation pathway. The polypeptide is Ras-related protein Rab-7b (Rab7b) (Mus musculus (Mouse)).